A 360-amino-acid chain; its full sequence is Phospho-N-acetylmuramoyl-pentapeptide-transferase (360 aa).

10 consecutive transmembrane segments (helical) span residues Tyr-21 to Gly-41, Thr-73 to Leu-93, Ala-94 to Val-114, Trp-132 to Gly-152, Ile-168 to Gly-188, Gly-199 to Thr-219, Val-239 to Tyr-259, Val-263 to Leu-283, Phe-288 to Val-308, and Val-338 to Lys-358.

It belongs to the glycosyltransferase 4 family. MraY subfamily. Requires Mg(2+) as cofactor.

It is found in the cell inner membrane. It catalyses the reaction UDP-N-acetyl-alpha-D-muramoyl-L-alanyl-gamma-D-glutamyl-meso-2,6-diaminopimeloyl-D-alanyl-D-alanine + di-trans,octa-cis-undecaprenyl phosphate = di-trans,octa-cis-undecaprenyl diphospho-N-acetyl-alpha-D-muramoyl-L-alanyl-D-glutamyl-meso-2,6-diaminopimeloyl-D-alanyl-D-alanine + UMP. It participates in cell wall biogenesis; peptidoglycan biosynthesis. In terms of biological role, catalyzes the initial step of the lipid cycle reactions in the biosynthesis of the cell wall peptidoglycan: transfers peptidoglycan precursor phospho-MurNAc-pentapeptide from UDP-MurNAc-pentapeptide onto the lipid carrier undecaprenyl phosphate, yielding undecaprenyl-pyrophosphoryl-MurNAc-pentapeptide, known as lipid I. The chain is Phospho-N-acetylmuramoyl-pentapeptide-transferase from Haemophilus influenzae (strain ATCC 51907 / DSM 11121 / KW20 / Rd).